Here is a 339-residue protein sequence, read N- to C-terminus: Protein H339R (339 aa).

It belongs to the asfivirus H339R family. In terms of assembly, interacts with host NACA (alpha chain of nascent polypeptide-associated complex).

Its subcellular location is the host cytoplasm. It localises to the host nucleus. The polypeptide is Protein H339R (African swine fever virus (isolate Tick/Malawi/Lil 20-1/1983) (ASFV)).